Reading from the N-terminus, the 214-residue chain is Peroxiredoxin-5, mitochondrial (214 aa).

Residues 1–52 (MGLAGVCALRRSAGYILVGGAGGQSAAAAARRYSEGEWASGGVRSFSRAAAA) constitute a mitochondrion transit peptide. Positions 56–214 (IKVGDAIPAV…SLAPNIISQL (159 aa)) constitute a Thioredoxin domain. N6-acetyllysine is present on Lys-75. Lys-83 is subject to N6-acetyllysine; alternate. Residue Lys-83 is modified to N6-succinyllysine; alternate. Residue Cys-100 is the Cysteine sulfenic acid (-SOH) intermediate of the active site. Cys-100 carries the S-palmitoyl cysteine lipid modification. Cys-100 and Cys-204 are disulfide-bonded. The residue at position 116 (Lys-116) is an N6-succinyllysine. A phosphoserine mark is found at Ser-171 and Ser-182. Positions 212–214 (SQL) match the Microbody targeting signal motif.

Belongs to the peroxiredoxin family. Prx5 subfamily. Monomer. In terms of processing, S-palmitoylated. Palmitoylation occurs on the active site, inhibiting its reactivity; therefore PRDX5 palmitoylation status determines its antioxidant capacity. Post-translationally, S-palmitoylated. Depalmitoylated by ABHD10. In terms of tissue distribution, widely expressed.

It is found in the mitochondrion. It localises to the cytoplasm. The protein localises to the peroxisome matrix. The catalysed reaction is a hydroperoxide + [thioredoxin]-dithiol = an alcohol + [thioredoxin]-disulfide + H2O. Thiol-specific peroxidase that catalyzes the reduction of hydrogen peroxide and organic hydroperoxides to water and alcohols, respectively. Plays a role in cell protection against oxidative stress by detoxifying peroxides and as sensor of hydrogen peroxide-mediated signaling events. In Homo sapiens (Human), this protein is Peroxiredoxin-5, mitochondrial.